The primary structure comprises 285 residues: Probable endonuclease 4 (285 aa).

Positions 69, 109, 145, 179, 182, 216, 229, 231, and 261 each coordinate Zn(2+).

It belongs to the AP endonuclease 2 family. The cofactor is Zn(2+).

The enzyme catalyses Endonucleolytic cleavage to 5'-phosphooligonucleotide end-products.. Its function is as follows. Endonuclease IV plays a role in DNA repair. It cleaves phosphodiester bonds at apurinic or apyrimidinic (AP) sites, generating a 3'-hydroxyl group and a 5'-terminal sugar phosphate. The polypeptide is Probable endonuclease 4 (Cronobacter sakazakii (strain ATCC BAA-894) (Enterobacter sakazakii)).